Consider the following 672-residue polypeptide: COBRA-like protein 10 (672 aa).

The signal sequence occupies residues methionine 1–glycine 35. N-linked (GlcNAc...) asparagine glycans are attached at residues asparagine 79, asparagine 135, asparagine 264, asparagine 328, asparagine 339, asparagine 368, asparagine 422, asparagine 442, asparagine 483, asparagine 562, asparagine 570, and asparagine 589. The CBM2 domain occupies lysine 502 to isoleucine 607. Residue serine 646 is the site of GPI-anchor amidated serine attachment. Positions serine 647–aspartate 672 are cleaved as a propeptide — removed in mature form. A Required for processing by the PIG complex, a critical step for apical plasma membrane localization in pollen tubes motif is present at residues isoleucine 664 to aspartate 672.

This sequence belongs to the COBRA family. Post-translationally, the GPI-anchor attachment at Ser-646 requires APTG1. As to expression, expressed in roots, stems, leaves, flowers and siliques. Specific expression in the pollen tube.

It localises to the cell membrane. Its subcellular location is the cytoplasm. The protein resides in the vesicle. Its function is as follows. Involved in the deposition of apical pectin cap and cellulose microfibrils in pollen tubes. Not essential for pollen development, hydration or germination, but required for pollen tubes growth in the female transmitting tract of pistil and toward micropyles, via the perception of ovule guidance cues. This chain is COBRA-like protein 10, found in Arabidopsis thaliana (Mouse-ear cress).